Here is a 74-residue protein sequence, read N- to C-terminus: Guanine nucleotide-binding protein G(T) subunit gamma-T1 (74 aa).

At Cys-71 the chain carries Cysteine methyl ester. Cys-71 carries the S-farnesyl cysteine lipid modification. Positions 72–74 are cleaved as a propeptide — removed in mature form; sequence VIS.

This sequence belongs to the G protein gamma family. As to quaternary structure, g proteins are composed of 3 units, alpha, beta and gamma. Retinal rod outer segment.

It is found in the cell membrane. Its function is as follows. Guanine nucleotide-binding proteins (G proteins) are involved as a modulator or transducer in various transmembrane signaling systems. The beta and gamma chains are required for the GTPase activity, for replacement of GDP by GTP, and for G protein-effector interaction. The protein is Guanine nucleotide-binding protein G(T) subunit gamma-T1 (GNGT1) of Canis lupus familiaris (Dog).